A 166-amino-acid polypeptide reads, in one-letter code: MTEENQVTAQEEAQTPFELQIQRIYIKDVSFEAPNLPTIFHQEWKPQLGFELDTETKQLDEDLYEVVLHINVSTTLEDSGDTAFICEVKQAGVFTIKGIEGIQLAHCLASQCPNVLYPYARELISSLVNRGTFPALNLSPVNFDALFMDYLQRQEAEQNAEAPAVN.

This sequence belongs to the SecB family. Homotetramer, a dimer of dimers. One homotetramer interacts with 1 SecA dimer.

It localises to the cytoplasm. Functionally, one of the proteins required for the normal export of preproteins out of the cell cytoplasm. It is a molecular chaperone that binds to a subset of precursor proteins, maintaining them in a translocation-competent state. It also specifically binds to its receptor SecA. The sequence is that of Protein-export protein SecB from Actinobacillus pleuropneumoniae serotype 7 (strain AP76).